The chain runs to 484 residues: Antibiotic efflux pump outer membrane protein ArpC (484 aa).

Positions 1 to 17 (MTKSLLSLAVTAFILGG) are cleaved as a signal peptide. Residue cysteine 18 is the site of N-palmitoyl cysteine attachment. Residue cysteine 18 is the site of S-diacylglycerol cysteine attachment.

The protein belongs to the outer membrane factor (OMF) (TC 1.B.17) family.

The protein resides in the cell outer membrane. The outer membrane component of an antibiotic efflux pump. Confers resistance to numerous structurally unrelated antibiotics such as carbenicillin, chloramphenicol, erythromycin, novobiocin, streptomycin and tetracycline. Is not involved in organic solvent efflux. The chain is Antibiotic efflux pump outer membrane protein ArpC (arpC) from Pseudomonas putida (Arthrobacter siderocapsulatus).